The following is a 465-amino-acid chain: tRNA-2-methylthio-N(6)-dimethylallyladenosine synthase (465 aa).

The MTTase N-terminal domain maps to 26 to 141 (MRAHIITYGC…LPEALKANER (116 aa)). Positions 35, 71, 104, 173, 177, and 180 each coordinate [4Fe-4S] cluster. Residues 159-388 (PKGALSAHVT…IEKQKEWSYR (230 aa)) enclose the Radical SAM core domain. In terms of domain architecture, TRAM spans 391–453 (LEWVGKTVEV…PHLLFGEVVG (63 aa)).

The protein belongs to the methylthiotransferase family. MiaB subfamily. As to quaternary structure, monomer. [4Fe-4S] cluster is required as a cofactor.

The protein localises to the cytoplasm. The catalysed reaction is N(6)-dimethylallyladenosine(37) in tRNA + (sulfur carrier)-SH + AH2 + 2 S-adenosyl-L-methionine = 2-methylsulfanyl-N(6)-dimethylallyladenosine(37) in tRNA + (sulfur carrier)-H + 5'-deoxyadenosine + L-methionine + A + S-adenosyl-L-homocysteine + 2 H(+). Functionally, catalyzes the methylthiolation of N6-(dimethylallyl)adenosine (i(6)A), leading to the formation of 2-methylthio-N6-(dimethylallyl)adenosine (ms(2)i(6)A) at position 37 in tRNAs that read codons beginning with uridine. The chain is tRNA-2-methylthio-N(6)-dimethylallyladenosine synthase from Thermus thermophilus (strain ATCC BAA-163 / DSM 7039 / HB27).